Here is a 367-residue protein sequence, read N- to C-terminus: FAD synthetase 2, chloroplastic (367 aa).

The transit peptide at Met1–Arg57 directs the protein to the chloroplast.

Mg(2+) is required as a cofactor.

Its subcellular location is the plastid. The protein localises to the chloroplast. The enzyme catalyses FMN + ATP + H(+) = FAD + diphosphate. The protein operates within cofactor biosynthesis; FAD biosynthesis; FAD from FMN: step 1/1. Its function is as follows. Catalyzes the adenylation of flavin mononucleotide (FMN) to form flavin adenine dinucleotide (FAD) coenzyme. The chain is FAD synthetase 2, chloroplastic from Arabidopsis thaliana (Mouse-ear cress).